The sequence spans 391 residues: Arginine biosynthesis bifunctional protein ArgJ (391 aa).

Thr-149, Lys-172, Thr-183, Glu-263, Asn-386, and Ser-391 together coordinate substrate. The Nucleophile role is filled by Thr-183.

It belongs to the ArgJ family. Heterotetramer of two alpha and two beta chains.

The protein resides in the cytoplasm. The enzyme catalyses N(2)-acetyl-L-ornithine + L-glutamate = N-acetyl-L-glutamate + L-ornithine. It carries out the reaction L-glutamate + acetyl-CoA = N-acetyl-L-glutamate + CoA + H(+). It participates in amino-acid biosynthesis; L-arginine biosynthesis; L-ornithine and N-acetyl-L-glutamate from L-glutamate and N(2)-acetyl-L-ornithine (cyclic): step 1/1. It functions in the pathway amino-acid biosynthesis; L-arginine biosynthesis; N(2)-acetyl-L-ornithine from L-glutamate: step 1/4. In terms of biological role, catalyzes two activities which are involved in the cyclic version of arginine biosynthesis: the synthesis of N-acetylglutamate from glutamate and acetyl-CoA as the acetyl donor, and of ornithine by transacetylation between N(2)-acetylornithine and glutamate. The sequence is that of Arginine biosynthesis bifunctional protein ArgJ from Bifidobacterium longum (strain NCC 2705).